Here is a 431-residue protein sequence, read N- to C-terminus: Enolase (431 aa).

Gln-167 is a (2R)-2-phosphoglycerate binding site. Catalysis depends on Glu-209, which acts as the Proton donor. Positions 246, 289, and 316 each coordinate Mg(2+). The (2R)-2-phosphoglycerate site is built by Lys-341, Arg-370, Ser-371, and Lys-392. The active-site Proton acceptor is the Lys-341.

This sequence belongs to the enolase family. In terms of assembly, component of the RNA degradosome, a multiprotein complex involved in RNA processing and mRNA degradation. Requires Mg(2+) as cofactor.

It is found in the cytoplasm. The protein localises to the secreted. It localises to the cell surface. It catalyses the reaction (2R)-2-phosphoglycerate = phosphoenolpyruvate + H2O. It participates in carbohydrate degradation; glycolysis; pyruvate from D-glyceraldehyde 3-phosphate: step 4/5. Catalyzes the reversible conversion of 2-phosphoglycerate (2-PG) into phosphoenolpyruvate (PEP). It is essential for the degradation of carbohydrates via glycolysis. The sequence is that of Enolase from Shewanella pealeana (strain ATCC 700345 / ANG-SQ1).